Reading from the N-terminus, the 366-residue chain is MTPTTTPVSNPDALAPGTQDVHTLKGTLQRLAPGTPLRDSLDRIVRGHTGALIVIGDDENVTSICDGGFEFDVPFAATRLRELCKMDGAVILSSDIERIKRANVQLLPSPTWPTQESGTRHRSAERTALHTGVPVIAVSESQNTITLYVEGKAHMLEQPSTLLNRANQALGTMERYRDRLDQVNNRLHLAELHSYVTVIDVVSVIQREEMLRRVGEIIDGDVLELGKDAKQIQIQLSELRGDNDRERESIIADYLVTDGIPADEEIYAALEAISHLDDKALLKPANIARILGLPPTEEALDEPVAPRGYRTLNRIPRVQKFLMDKLIVEFGNLDALLNASVEDLSAVDGVGSLWARHITDGLGRLS.

In terms of domain architecture, DAC spans 21–159 (VHTLKGTLQR…EGKAHMLEQP (139 aa)). Residues Gly88, Leu106, and 119–123 (TRHRS) contribute to the ATP site.

The protein belongs to the DisA family. In terms of assembly, homooctamer. It depends on Mg(2+) as a cofactor.

The catalysed reaction is 2 ATP = 3',3'-c-di-AMP + 2 diphosphate. Functionally, participates in a DNA-damage check-point. DisA forms globular foci that rapidly scan along the chromosomes searching for lesions. Its function is as follows. Also has diadenylate cyclase activity, catalyzing the condensation of 2 ATP molecules into cyclic di-AMP (c-di-AMP). c-di-AMP likely acts as a signaling molecule that may couple DNA integrity with a cellular process. The polypeptide is DNA integrity scanning protein DisA (Corynebacterium glutamicum (strain R)).